The sequence spans 75 residues: HSQGTFTNDYSKYMDTRRAQDFVQWLMSTXXXXXXXXXXXXXXXYADAPYISDVYSYLQDQVAKKWLKSGQDRRE.

This sequence belongs to the glucagon family.

The protein localises to the secreted. Plays a key role in glucose metabolism and homeostasis. Regulates blood glucose by increasing gluconeogenesis and decreasing glycolysis. In Amia calva (Bowfin), this protein is Pro-glucagon (gcg).